Consider the following 144-residue polypeptide: Hemoglobin subunit alpha-1 (144 aa).

An N-acetylserine modification is found at Ser1. The Globin domain occupies 1 to 144 (SLTAKDKSVV…VSAALADKYR (144 aa)). His61 lines the O2 pocket. His90 contacts heme b.

Belongs to the globin family. As to quaternary structure, heterotetramer of two alpha chains and two beta chains. Red blood cells.

In terms of biological role, involved in oxygen transport from gills to the various peripheral tissues. This is Hemoglobin subunit alpha-1 (hba1) from Oncorhynchus mykiss (Rainbow trout).